The following is a 363-amino-acid chain: uncharacterized protein (363 aa).

The next 7 membrane-spanning stretches (helical) occupy residues 20–40 (WFFT…NTNI), 63–83 (INFA…FLVM), 101–121 (FPLI…GVQS), 141–161 (SVWQ…FTAF), 186–206 (FSLL…IMLA), 227–247 (IFKY…CVVL), and 268–288 (FLIV…WYVL). The interval 329-363 (PRADLTPNDTLHMESKKKPLSQSPRVVIEEEDVAE) is disordered.

Its subcellular location is the membrane. This is an uncharacterized protein from Caenorhabditis elegans.